A 356-amino-acid chain; its full sequence is Probable L-asparaginase 4 (356 aa).

Positions 1-22 (MWGFIVTCGIFLVLLCQLRLLS) are cleaved as a signal peptide. The Asparaginase/glutaminase domain occupies 36 to 356 (PNVTVFAMGG…RDIEGLFSIK (321 aa)). N-linked (GlcNAc...) asparagine glycosylation occurs at Asn37. The active-site O-isoaspartyl threonine intermediate is Thr46. A glycan (N-linked (GlcNAc...) asparagine) is linked at Asn52. Residues Ser93 and 126–127 (TD) each bind substrate. Asn176 is a glycosylation site (N-linked (GlcNAc...) asparagine).

The protein belongs to the asparaginase 1 family.

It localises to the secreted. The protein localises to the cell wall. The catalysed reaction is L-asparagine + H2O = L-aspartate + NH4(+). The sequence is that of Probable L-asparaginase 4 from Schizosaccharomyces pombe (strain 972 / ATCC 24843) (Fission yeast).